The following is a 351-amino-acid chain: Uroporphyrinogen decarboxylase (351 aa).

Substrate contacts are provided by residues 26 to 30, phenylalanine 45, aspartate 76, tyrosine 153, serine 208, and histidine 323; that span reads RQAGR.

Belongs to the uroporphyrinogen decarboxylase family. As to quaternary structure, homodimer.

It is found in the cytoplasm. The enzyme catalyses uroporphyrinogen III + 4 H(+) = coproporphyrinogen III + 4 CO2. It functions in the pathway porphyrin-containing compound metabolism; protoporphyrin-IX biosynthesis; coproporphyrinogen-III from 5-aminolevulinate: step 4/4. Functionally, catalyzes the decarboxylation of four acetate groups of uroporphyrinogen-III to yield coproporphyrinogen-III. This is Uroporphyrinogen decarboxylase from Prochlorococcus marinus (strain SARG / CCMP1375 / SS120).